Reading from the N-terminus, the 1129-residue chain is Phospholipid-transporting ATPase 11C (1129 aa).

Residues methionine 1–aspartate 83 lie on the Cytoplasmic side of the membrane. The helical transmembrane segment at threonine 84–isoleucine 104 threads the bilayer. Over lysine 105–serine 287 the chain is Extracellular. Residues isoleucine 288–threonine 308 form a helical membrane-spanning segment. The Cytoplasmic segment spans residues leucine 309–aspartate 343. A helical membrane pass occupies residues phenylalanine 344–glutamate 364. Over methionine 365–tyrosine 876 the chain is Extracellular. Aspartate 409 (4-aspartylphosphate intermediate) is an active-site residue. Positions 409, 410, and 411 each coordinate ATP. Aspartate 409 serves as a coordination point for Mg(2+). Residue threonine 411 participates in Mg(2+) binding. Serine 442 bears the Phosphoserine mark. Positions 498, 540, 563, and 594 each coordinate ATP. A coiled-coil region spans residues aspartate 607–isoleucine 643. Threonine 674, glycine 675, and aspartate 676 together coordinate ATP. The stretch at threonine 695–leucine 726 forms a coiled coil. ATP contacts are provided by arginine 789 and lysine 795. Residue aspartate 816 coordinates Mg(2+). ATP is bound by residues asparagine 819 and aspartate 820. Aspartate 820 provides a ligand contact to Mg(2+). The chain crosses the membrane as a helical span at residues phenylalanine 877–phenylalanine 897. The Cytoplasmic portion of the chain corresponds to serine 898–alanine 905. A helical transmembrane segment spans residues alanine 906–leucine 926. Topologically, residues glutamate 927–glutamine 952 are extracellular. A helical membrane pass occupies residues leucine 953–glycine 973. Over threonine 974–lysine 988 the chain is Cytoplasmic. The chain crosses the membrane as a helical span at residues isoleucine 989 to leucine 1009. At lysine 1010 to histidine 1023 the chain is on the extracellular side. The helical transmembrane segment at phenylalanine 1024–isoleucine 1044 threads the bilayer. Residues tryptophan 1045–threonine 1066 are Cytoplasmic-facing. A helical transmembrane segment spans residues tryptophan 1067–valine 1087. Topologically, residues lysine 1088–leucine 1129 are extracellular. Residues serine 1105, serine 1113, and serine 1123 each carry the phosphoserine modification. Positions serine 1113–leucine 1118 match the Di-leucine motif motif.

It belongs to the cation transport ATPase (P-type) (TC 3.A.3) family. Type IV subfamily. In terms of assembly, component of a P4-ATPase flippase complex which consists of a catalytic alpha subunit ATP11C and an accessory beta subunit TMEM30A. It depends on Mg(2+) as a cofactor. Proteolytically cleaved by CASP3, CASP6 and CASP7. Post-translationally, phosphorylated at Ser-1113 likely by PRKCA; this creates a functional di-leucine motif that is sufficient for endocytosis. Widely expressed. Expressed in retina, brain, liver and testes (at protein level). Expressed in lung, bone marrow, lymph nodes, prostate, ovary and uterus. Expressed in fetus.

Its subcellular location is the cell membrane. The protein localises to the endoplasmic reticulum membrane. The protein resides in the early endosome membrane. It is found in the recycling endosome membrane. The enzyme catalyses ATP + H2O + phospholipidSide 1 = ADP + phosphate + phospholipidSide 2.. It catalyses the reaction a 1,2-diacyl-sn-glycero-3-phospho-L-serine(out) + ATP + H2O = a 1,2-diacyl-sn-glycero-3-phospho-L-serine(in) + ADP + phosphate + H(+). It carries out the reaction a 1,2-diacyl-sn-glycero-3-phosphoethanolamine(out) + ATP + H2O = a 1,2-diacyl-sn-glycero-3-phosphoethanolamine(in) + ADP + phosphate + H(+). Functionally, catalytic component of a P4-ATPase flippase complex which catalyzes the hydrolysis of ATP coupled to the transport of aminophospholipids, phosphatidylserines (PS) and phosphatidylethanolamines (PE), from the outer to the inner leaflet of the plasma membrane. Major PS-flippase in immune cell subsets. In erythrocyte plasma membrane, it is required to maintain PS in the inner leaflet preventing its exposure on the surface. This asymmetric distribution is critical for the survival of erythrocytes in circulation since externalized PS is a phagocytic signal for erythrocyte clearance by splenic macrophages. Required for B cell differentiation past the pro-B cell stage. Seems to mediate PS flipping in pro-B cells. May be involved in the transport of cholestatic bile acids. In Mus musculus (Mouse), this protein is Phospholipid-transporting ATPase 11C.